The chain runs to 363 residues: Chorismate synthase (363 aa).

The segment at 44–63 (DLDRRKPGTSRHTTQRQEPD) is disordered. Residues arginine 48 and arginine 54 each coordinate NADP(+). Residues 125-127 (RSS), 237-238 (NA), glycine 277, 292-296 (KPTSS), and arginine 318 contribute to the FMN site.

This sequence belongs to the chorismate synthase family. In terms of assembly, homotetramer. The cofactor is FMNH2.

It catalyses the reaction 5-O-(1-carboxyvinyl)-3-phosphoshikimate = chorismate + phosphate. It participates in metabolic intermediate biosynthesis; chorismate biosynthesis; chorismate from D-erythrose 4-phosphate and phosphoenolpyruvate: step 7/7. Catalyzes the anti-1,4-elimination of the C-3 phosphate and the C-6 proR hydrogen from 5-enolpyruvylshikimate-3-phosphate (EPSP) to yield chorismate, which is the branch point compound that serves as the starting substrate for the three terminal pathways of aromatic amino acid biosynthesis. This reaction introduces a second double bond into the aromatic ring system. The chain is Chorismate synthase from Pseudomonas fluorescens (strain ATCC BAA-477 / NRRL B-23932 / Pf-5).